A 403-amino-acid polypeptide reads, in one-letter code: MSSYLFTSESVSEGHPDKIADQISDAVLDAILAQDKRARVACETMVKTGVAIVAGEVTTSAWIDLEALTRKVILDIGYNSSDVGFDGETCGVLNLIGKQSPDINQGVDRKNPEQQGAGDQGLMFGYATNETDSYMPAAIHLSHRLVEQQAKIRKKKNSALSWLRPDAKSQVTLRYEDGVATAIDAVVLSTHHDPGVKQKDLIEAVREEILKPVLPAKWLHKGTKFHINPTGKFVIGGPVGDCGLTGRKIIVDTYGGWARHGGGAFSGKDPSKVDRSAAYAARYVAKNVVAAGLADRCEVQVSYAIGVAEPTSISVTTFGTGKIADELIEKLIRKHFDLRPFGIIQMLDLIHPMYQQTASYGHFGRKPKDFTYTDGTGAQHSATSFSWEKTDRAEALRAAAKLK.

His15 lines the ATP pocket. Asp17 is a Mg(2+) binding site. Glu43 is a K(+) binding site. Residues Glu56 and Gln99 each contribute to the L-methionine site. The flexible loop stretch occupies residues Gln99 to Arg109. Residues Asp166–Lys168, Lys232–Phe233, Asp241, Arg247–Lys248, Ala264, and Lys268 each bind ATP. Asp241 contacts L-methionine. Lys272 contributes to the L-methionine binding site.

The protein belongs to the AdoMet synthase family. As to quaternary structure, homotetramer; dimer of dimers. It depends on Mg(2+) as a cofactor. K(+) is required as a cofactor.

The protein resides in the cytoplasm. The enzyme catalyses L-methionine + ATP + H2O = S-adenosyl-L-methionine + phosphate + diphosphate. Its pathway is amino-acid biosynthesis; S-adenosyl-L-methionine biosynthesis; S-adenosyl-L-methionine from L-methionine: step 1/1. Its function is as follows. Catalyzes the formation of S-adenosylmethionine (AdoMet) from methionine and ATP. The overall synthetic reaction is composed of two sequential steps, AdoMet formation and the subsequent tripolyphosphate hydrolysis which occurs prior to release of AdoMet from the enzyme. This is S-adenosylmethionine synthase from Xanthomonas campestris pv. campestris (strain ATCC 33913 / DSM 3586 / NCPPB 528 / LMG 568 / P 25).